The primary structure comprises 515 residues: MDEFHRCGKEDSFWQQCFLYPLFFQEDLYAISHDHYLDVSSSSRPMEHLSSNDQLSFLTVKRLIGQIRQQNHSIVLFVNCDPNPLADRKKSFYSESVLEALTLVLEVPFSIWSKSSVEGMNECKSFRSIHSIFPFLEDKFPHSNSILDARIPYSIHPEILVRTFRRWIRDAPSLHPLRSVLYDYRNSPENLQRSIIVVPRVNTRFFLFLLNYYVCECESILFSRLKRSSHSRSLSHGSFPQRTHFHRSIKHIIIFSRRNSLKSIWSLKDPKIHYVRYGERPIIAIKGADLLVKKCRYYLLIFRQFYFHLWSEPYRVCSHQLSKNCSSSPGYFLRVRMNPLLVRTKTLDELFIPVLITNEMDPIVPIVPIIGLLATEKFCDISGRPISKLSWTSLTDDDILDRFDQIWRNLFHYYSGSFDRDGLYRIKYILLLSCAKTLACKHKSTIRVVRKELGPELFKKSFSKEREFDSLPFSSKAAARSQRERIWHSDIPQINPLANSWQKIQDLKIENLFDQ.

The protein belongs to the intron maturase 2 family. MatK subfamily.

It is found in the plastid. It localises to the chloroplast. Functionally, usually encoded in the trnK tRNA gene intron. Probably assists in splicing its own and other chloroplast group II introns. This is Maturase K from Pinus uncinata (Mountain pine).